Reading from the N-terminus, the 579-residue chain is uncharacterized protein (579 aa).

The region spanning 449–577 (QKGVFILVDI…GKNRLMIHDS (129 aa)) is the GGDEF domain.

This is an uncharacterized protein from Bacillus subtilis (strain 168).